The primary structure comprises 447 residues: GTPase Der (447 aa).

EngA-type G domains lie at 4–165 (QIIT…PEEE) and 180–357 (LQIV…KIWN). GTP is bound by residues 10 to 17 (GRPNVGKS), 57 to 61 (DTPGL), 119 to 122 (NKCE), 186 to 193 (GRPNAGKS), 233 to 237 (DTAGL), and 298 to 301 (NKWD). A KH-like domain is found at 358–443 (KKITTSKLNE…PIRFTYVKTK (86 aa)).

It belongs to the TRAFAC class TrmE-Era-EngA-EngB-Septin-like GTPase superfamily. EngA (Der) GTPase family. As to quaternary structure, associates with the 50S ribosomal subunit.

Functionally, GTPase that plays an essential role in the late steps of ribosome biogenesis. The polypeptide is GTPase Der (Rickettsia rickettsii (strain Sheila Smith)).